A 94-amino-acid polypeptide reads, in one-letter code: C-X-C motif chemokine 11-1 (94 aa).

The signal sequence occupies residues 1 to 19 (MKTVTALLLVSLAVVAIEG). 2 cysteine pairs are disulfide-bonded: Cys-27–Cys-54 and Cys-29–Cys-71.

The protein belongs to the intercrine alpha (chemokine CxC) family.

It is found in the secreted. Ligand for cxcr3.2. Chemotactic for macrophages. The sequence is that of C-X-C motif chemokine 11-1 (cxcl11.1) from Danio rerio (Zebrafish).